The primary structure comprises 510 residues: Cytochrome P450 monooxygenase macH (510 aa).

The chain crosses the membrane as a helical span at residues 7–29; that stretch reads LPVSLWLIAAGTFAVYHAIRAVY. C454 contacts heme.

This sequence belongs to the cytochrome P450 family. Heme is required as a cofactor.

It localises to the membrane. It functions in the pathway secondary metabolite biosynthesis; terpenoid biosynthesis. Cytochrome P450 monooxygenase; part of the gene cluster that mediates the biosynthesis of macrophorins, isoprenoid epoxycyclohexenones containing cyclized drimane moieties. The first step of the pathway is the synthesis of 6-methylsalicylic acid (6-MSA) by the polyketide synthase macA. 6-MSA is then converted to m-cresol by the decarboxylase macB. The cytochrome P450 monooxygenase macC then catalyzes the oxidation of m-cresol to toluquinol. Epoxidation of toluquinol is then performed by the short chain dehydrogenase macD, with the help of macE, and a further prenylation by macG leads to 7-deacetoxyyanuthone A. The next step is the hydroxylation of C-22 of 7-deacetoxyyanuthone A by the cytochrome P450 monooxygenase macH to yield 22-deacetylyanuthone A. O-Mevalon transferase macI then attaches mevalon to the hydroxyl group of 22-deacetylyanuthone A to produce yanuthone E. The terpene cyclase macJ catalyzes the cyclization of 22-deacetylyanuthone A to macrophorin A. MacJ is also able to catalyze cyclization of yanuthone E and 7-deacetoxyyanuthone A to their corresponding macrophorins. The macJ products can be further modified by macH and macJ, as well as by the FAD-dependent monooxygenase macF, to produce additional macrophorins, including 4'-oxomacrophorin A, 4'-oxomacrophorin D and 4'-oxomacrophorin E. In Penicillium terrestre, this protein is Cytochrome P450 monooxygenase macH.